Here is a 263-residue protein sequence, read N- to C-terminus: Endonuclease 8 (263 aa).

Proline 2 serves as the catalytic Schiff-base intermediate with DNA. Glutamate 3 functions as the Proton donor in the catalytic mechanism. Lysine 53 (proton donor; for beta-elimination activity) is an active-site residue. DNA-binding residues include glutamine 70, arginine 125, and asparagine 169. The segment at 229–263 adopts an FPG-type zinc-finger fold; it reads KVFHRDGEACERCGGIIEKTTLSSRPFYWCAHCQK. The active-site Proton donor; for delta-elimination activity is arginine 253.

Belongs to the FPG family. The cofactor is Zn(2+).

It carries out the reaction 2'-deoxyribonucleotide-(2'-deoxyribose 5'-phosphate)-2'-deoxyribonucleotide-DNA = a 3'-end 2'-deoxyribonucleotide-(2,3-dehydro-2,3-deoxyribose 5'-phosphate)-DNA + a 5'-end 5'-phospho-2'-deoxyribonucleoside-DNA + H(+). Its function is as follows. Involved in base excision repair of DNA damaged by oxidation or by mutagenic agents. Acts as a DNA glycosylase that recognizes and removes damaged bases. Has a preference for oxidized pyrimidines, such as thymine glycol, 5,6-dihydrouracil and 5,6-dihydrothymine. Has AP (apurinic/apyrimidinic) lyase activity and introduces nicks in the DNA strand. Cleaves the DNA backbone by beta-delta elimination to generate a single-strand break at the site of the removed base with both 3'- and 5'-phosphates. In Salmonella typhi, this protein is Endonuclease 8.